We begin with the raw amino-acid sequence, 379 residues long: Putative F-box protein At2g33190 (379 aa).

The F-box domain occupies 6–53 (NGWSKLYPDLLRSIFESLSCLDFHRAGTVCSNWYAVSRSCPLYPWRIV).

The protein is Putative F-box protein At2g33190 of Arabidopsis thaliana (Mouse-ear cress).